The primary structure comprises 391 residues: 2-deoxy-scyllo-inosose synthase (391 aa).

Residues Asp-42, 73 to 76, 105 to 109, 129 to 130, 140 to 142, and 151 to 152 each bind NAD(+); these read EVHK, GVTGN, TT, SLK, and KN. Lys-142 is a catalytic residue. Glu-184 is a Co(2+) binding site. Glu-244 is a catalytic residue. Positions 247 and 263 each coordinate Co(2+).

This sequence belongs to the sugar phosphate cyclases superfamily. DOI synthase family. NAD(+) serves as cofactor. It depends on Co(2+) as a cofactor.

The enzyme catalyses D-glucose 6-phosphate = 2-deoxy-L-scyllo-inosose + phosphate. It participates in metabolic intermediate biosynthesis; 2-deoxystreptamine biosynthesis; 2-deoxystreptamine from D-glucose 6-phosphate: step 1/4. It functions in the pathway antibiotic biosynthesis; ribostamycin biosynthesis. Functionally, catalyzes the intramolecular carbocycle formation from D-glucose-6-phosphate to 2-deoxy-scyllo-inosose (DOI). The protein is 2-deoxy-scyllo-inosose synthase (rbmA) of Streptomyces ribosidificus.